The chain runs to 166 residues: UBA-like domain-containing protein 2 (166 aa).

The interval 120-166 is disordered; sequence QQPVWLPPASPTTHLHHHHHHPQPVWPPNSQPTGGPQKAMAAMDGQR.

This sequence belongs to the UBALD family.

The sequence is that of UBA-like domain-containing protein 2 (ubald2) from Xenopus tropicalis (Western clawed frog).